Consider the following 375-residue polypeptide: Probable butyrate kinase 2 (375 aa).

The protein belongs to the acetokinase family.

Its subcellular location is the cytoplasm. It catalyses the reaction butanoate + ATP = butanoyl phosphate + ADP. The protein is Probable butyrate kinase 2 of Thermotoga maritima (strain ATCC 43589 / DSM 3109 / JCM 10099 / NBRC 100826 / MSB8).